The chain runs to 393 residues: Protein phosphatase 2C homolog 4 (393 aa).

The PPM-type phosphatase domain occupies 33 to 368 (YNCVGSMQGY…DNMTAIIVVL (336 aa)). Residues D83, G84, D310, and D359 each contribute to the Mn(2+) site.

Belongs to the PP2C family. Mg(2+) is required as a cofactor. The cofactor is Mn(2+).

It catalyses the reaction O-phospho-L-seryl-[protein] + H2O = L-seryl-[protein] + phosphate. It carries out the reaction O-phospho-L-threonyl-[protein] + H2O = L-threonyl-[protein] + phosphate. This Saccharomyces cerevisiae (strain ATCC 204508 / S288c) (Baker's yeast) protein is Protein phosphatase 2C homolog 4 (PTC4).